Consider the following 212-residue polypeptide: ATP-dependent dethiobiotin synthetase BioD (212 aa).

13 to 18 (GIGKTV) is a binding site for ATP. T17 provides a ligand contact to Mg(2+). The active site involves K33. S37 is a substrate binding site. E100 contacts Mg(2+). Residues 100–103 (EGAG) and 184–186 (PRL) contribute to the ATP site.

It belongs to the dethiobiotin synthetase family. In terms of assembly, homodimer. Mg(2+) is required as a cofactor.

It is found in the cytoplasm. It catalyses the reaction (7R,8S)-7,8-diammoniononanoate + CO2 + ATP = (4R,5S)-dethiobiotin + ADP + phosphate + 3 H(+). It functions in the pathway cofactor biosynthesis; biotin biosynthesis; biotin from 7,8-diaminononanoate: step 1/2. Its function is as follows. Catalyzes a mechanistically unusual reaction, the ATP-dependent insertion of CO2 between the N7 and N8 nitrogen atoms of 7,8-diaminopelargonic acid (DAPA, also called 7,8-diammoniononanoate) to form a ureido ring. The protein is ATP-dependent dethiobiotin synthetase BioD of Rhodopseudomonas palustris (strain TIE-1).